We begin with the raw amino-acid sequence, 541 residues long: MDDCRFETSELQASVMISTPLFTDSWSSCNTANCNGSIKIHDIAGITYVAIPAVSMIQLGNLVGLPVTGDVLFPGLSSDEPLPMVDAAILKLFLQLKIKEGLELELLGKKLVVITGHSTGGALAAFTALWLLSQSSPPSFRVFCITFGSPLLGNQSLSTSISRSRLAHNFCHVVSIHDLVPRSSNEQFWPFGTYLFCSDKGGVCLDNAGSVRLMFNILNTTATQNTEEHQRYGHYVFTLSHMFLKSRSFLGGSIPDNSYQAGVALAVEALGFSNDDTSGVLVKECIETATRIVRAPILRSAELANELASVLPARLEIQWYKDRCDASEEQLGYYDFFKRYSLKRDFKVNMSRIRLAKFWDTVIKMVETNELPFDFHLGKKWIYASQFYQLLAEPLDIANFYKNRDIKTGGHYLEGNRPKRYEVIDKWQKGVKVPEECVRSRYASTTQDTCFWAKLEQAKEWLDEARKESSDPQRRSLLREKIVPFESYANTLVTKKEVSLDVKAKNSSYSVWEANLKEFKCKMGYENEIEMVVDESDAMET.

The active-site Nucleophile is the Ser118. Active-site charge relay system residues include Asp178 and His229.

Belongs to the AB hydrolase superfamily. Lipase family. As to quaternary structure, part of a nuclear complex made of EDS1, SG101 and PAD4 that can be redirected to the cytoplasm in the presence of an extranuclear form of EDS1. Sabilized by direct interaction with EDS1 in infected leaves. Part of a nuclear protein complex made of VICTR, PAD4 and EDS1. Interacts with VICTR. Interacts with EDS1.

The protein resides in the nucleus. It is found in the cytoplasm. Probable lipase required downstream of MPK4 for accumulation of the plant defense-potentiating molecule, salicylic acid, thus contributing to the plant innate immunity against invasive biotrophic pathogens and to defense mechanisms upon recognition of microbe-associated molecular patterns (MAMPs). Participates in the regulation of various molecular and physiological processes that influence fitness. Together with SG101, required for programmed cell death (PCD) triggered by NBS-LRR resistance proteins (e.g. RPS4, RPW8.1 and RPW8.2) in response to the fungal toxin fumonisin B1 (FB1) and avirulent pathogens (e.g. P.syringae pv. tomato strain DC3000 avrRps4 and pv. maculicola, turnip crinkle virus (TCV), and H.arabidopsidis isolates CALA2, EMOY2, EMWA1 and HIND4). Together with EDS1, confers a basal resistance by restricting the growth of virulent pathogens (e.g. H.arabidopsidis isolates NOCO2 and EMCO5, E.orontii isolate MGH, and P.syringae pv. tomato strain DC3000 or expressing HopW1-1 (HopPmaA)). Necessary for the salicylic acid-(SA-) dependent systemic acquired resistance (SAR) response that involves expression of multiple defense responses, including synthesis of the phytoalexin camalexin and expression of pathogenesis-related genes (e.g. PR1, ALD1, BGL2 and PR5) in response to pathogens, triggering a signal amplification loop that increases SA levels via EDS5 and SID2, but, together with EDS1, seems to repress the ethylene/jasmonic acid (ET/JA) defense pathway. May also function in response to abiotic stresses such as UV-C light and LSD1-dependent acclimatization to light conditions that promote excess excitation energy (EEE), probably by transducing redox signals and modulating stomatal conductance. Regulates the formation of lysigenous aerenchyma in hypocotyls in response to hypoxia, maybe via hydrogen peroxide production. Modulates leaf senescence in insect-infested tissue and triggers a phloem-based defense mechanism including antibiosis (e.g. green peach aphid (GPA), M.persicae) to limit phloem sap uptake and insect growth, thus providing an EDS1-independent basal resistance to insects. Also involved in regulation of root meristematic zone-targeted growth arrest together with EDS1 and in a VICTR-dependent manner. The sequence is that of Lipase-like PAD4 (PAD4) from Arabidopsis thaliana (Mouse-ear cress).